The primary structure comprises 150 residues: Arginine repressor (150 aa).

It belongs to the ArgR family.

The protein resides in the cytoplasm. Its pathway is amino-acid biosynthesis; L-arginine biosynthesis [regulation]. Regulates arginine biosynthesis genes. This Desulfitobacterium hafniense (strain DSM 10664 / DCB-2) protein is Arginine repressor.